We begin with the raw amino-acid sequence, 254 residues long: Probable transcriptional regulatory protein HDEF_0869 (254 aa).

The tract at residues 1-20 (MAGHSKWANTKHRKAAQDAK) is disordered.

The protein belongs to the TACO1 family.

The protein resides in the cytoplasm. This Hamiltonella defensa subsp. Acyrthosiphon pisum (strain 5AT) protein is Probable transcriptional regulatory protein HDEF_0869.